The sequence spans 155 residues: 3-dehydroquinate dehydratase (155 aa).

Residue Tyr32 is the Proton acceptor of the active site. Substrate-binding residues include Asn84, His90, and Asp97. His110 acts as the Proton donor in catalysis. Residues 111-112 (LS) and Arg121 contribute to the substrate site.

This sequence belongs to the type-II 3-dehydroquinase family. As to quaternary structure, homododecamer.

It catalyses the reaction 3-dehydroquinate = 3-dehydroshikimate + H2O. It functions in the pathway metabolic intermediate biosynthesis; chorismate biosynthesis; chorismate from D-erythrose 4-phosphate and phosphoenolpyruvate: step 3/7. Functionally, catalyzes a trans-dehydration via an enolate intermediate. The protein is 3-dehydroquinate dehydratase of Ralstonia pickettii (strain 12J).